Consider the following 1508-residue polypeptide: MIIIGVKRNINNSNNSNSNNNSNKKKDKIMSHNNNNTITGKNTNEIMNNNNNSNNNNNNNNNNNNNNNNNNNEEVKTEPIQQILKRLNSKNKIEVGATPNDIPTSIPSVKNLGKKYDSKAETHLLNQKVLSSPSKEVNSLKKSTNGTNTIPSSSIPSSPPSSPPSSSSLSSDRTSQDIPKSVNGLTASIVAKFSKNIDNNTTNNNSNNNNNSSLSTPIQSPRDSLETNPIKDEESEESEESEESKEEEEELKMGIKTTKTTSETIESSYSTSQLLKNDLIQEKGDDNNNIQEPQQPKYPTQTSFITDKSKRLSTPPINGTSISIGNNNNNNNNYINGNSGINTIPRNFQSHRVAGDWKDRKLNTLFTQGTVGGNGQNGTVRKNLIGTRELSTSSGILQCKDDSSSKDQDFEFNNSAGSSGNSSASNSNRNSIAFSSSNHFSSESSQSAPTLPIYNPSQYTSPSTPQSPSPSPSPPLISSKSIYINKPPPPHFNQQTNFSVSPTKSPSNEKQQQEDEDVKHLVRAFTNRKLNVHHAERKSKISVQDAEWIVKKFFHDTDRQSKFVLSENRTKDLNQPSSQFSPSTSPSTNSIPTNLLLSNKRLSTSLPNINTNINNSSNNTSSSSSSSSTTSSPSPLTTSSSTSVLPPPLSSSSSSQLTESLKTRIEENNNNNNNKNINNNNNNNNNNGRNSIHDSQEMTELEDPHSSPSYRHLEEVGKKKYVSAEPSRRPGIKTPLFLNVPTLAMPTQFHQIPPERVSSNLFSVSVEENSYPDNPLLFNQQIINRVANDKDLSYLFFPVLKSSTKITSSTLNNIIPINKLNNQIHNNNNNNVIISNNTGNNNNNNNSSKNNNTVKGNKKQQNKSSSSSQNNSPPSDFSLSVSPSPCSSLTPSPSPSPSSPLIESSMFTKDLSPPPPAAAAIVLQQPVATTNNKSTDKDSRKSLWSSMKSSKPPISTSQPSTIQDTISTSPPSTSTSPTSNSPPTSISPPPPSITTGSSPPSTAGTSPPNDNGNNNNNSNKELTISIPITNVNVHESNIVVASTPRSGRDLATIVAEEFKDRTDIVFCTQHLSMNRIKVRSASLDAMIDLLTNHRLSQPDLVESFLLTYKTFTSPLAVLTKLIERYEETDNINNNNNNNNDDLIISTRTTATITNEDEDNSNSNSNSNKTNKNSSRTIKLGVLSIIKCWVDRHHYDFERNKALLSAIVAFLEGPVIDDGMEKVSNIILKIIDRKANEAEARRTGTALVMHTSTSHCKFPPSIPPSLSKPDQIPTLQNFDDLEIARQLTLIEHEAYSMVKPNECINLAFSKSDKEIRAPNIINIIKRSNLLPLWVATEIVQEERLTKRANIIKKFISIADQCKNLNNFNAVMEILSGLNLTPVFRLKKTWETLPRKYLATFRHLNSLMAPKFNFKVYRDVLHTKNLPCLPFLGVYLTDLTFLEEGSFDQAENGLINIVKRTQIANIIQEIQQYQQLSYSFAPVPIIKDFLLQIGGLQERALYKQSKIIEP.

8 disordered regions span residues 1-73, 128-182, 197-272, 396-517, 565-593, 606-727, 831-1021, and 1153-1172; these read MIII…NNNE, KVLS…PKSV, IDNN…YSTS, ILQC…EDED, LSENRTKDLNQPSSQFSPSTSPSTNSIPT, LPNI…AEPS, NVII…SNKE, and TNEDEDNSNSNSNSNKTNKN. Low complexity-rich tracts occupy residues 9-22 and 33-72; these read NINNSNNSNSNNNS and NNNNTITGKNTNEIMNNNNNSNNNNNNNNNNNNNNNNNNN. Composition is skewed to polar residues over residues 128–150 and 172–182; these read KVLSSPSKEVNSLKKSTNGTNTI and DRTSQDIPKSV. Low complexity predominate over residues 199–216; the sequence is NNTTNNNSNNNNNSSLST. Over residues 223-232 the composition is skewed to basic and acidic residues; the sequence is DSLETNPIKD. Over residues 233 to 250 the composition is skewed to acidic residues; the sequence is EESEESEESEESKEEEEE. Residues 255–272 are compositionally biased toward low complexity; that stretch reads IKTTKTTSETIESSYSTS. The segment covering 399-409 has biased composition (basic and acidic residues); sequence CKDDSSSKDQD. Low complexity predominate over residues 413–447; that stretch reads NNSAGSSGNSSASNSNRNSIAFSSSNHFSSESSQS. Over residues 465–475 the composition is skewed to pro residues; sequence PQSPSPSPSPP. Residues 492–510 show a composition bias toward polar residues; sequence FNQQTNFSVSPTKSPSNEK. Composition is skewed to low complexity over residues 574-593, 606-660, 668-687, 831-855, 862-891, 942-984, 993-1019, and 1160-1172; these read NQPSSQFSPSTSPSTNSIPT, LPNI…LTES, NNNNNNNKNINNNNNNNNNN, NVIISNNTGNNNNNNNSSKNNNTVK, NKSSSSSQNNSPPSDFSLSVSPSPCSSLTP, SLWS…SPPT, ITTGSSPPSTAGTSPPNDNGNNNNNSN, and SNSNSNSNKTNKN. Residues 659–686 adopt a coiled-coil conformation; it reads ESLKTRIEENNNNNNNKNINNNNNNNNN. The N-terminal Ras-GEF domain occupies 1074 to 1234; the sequence is NRIKVRSASL…IILKIIDRKA (161 aa). Residues 1278–1508 enclose the Ras-GEF domain; that stretch reads DDLEIARQLT…LYKQSKIIEP (231 aa).

Its function is as follows. Promotes the exchange of Ras-bound GDP by GTP. This is Ras guanine nucleotide exchange factor Y (gefY) from Dictyostelium discoideum (Social amoeba).